A 154-amino-acid chain; its full sequence is Myoglobin (154 aa).

The region spanning 2 to 148 (GLSEGEWQLV…FRKDIAAKYK (147 aa)) is the Globin domain. Position 4 is a phosphoserine (Ser4). A nitrite-binding site is contributed by His65. Residue His65 coordinates O2. Thr68 bears the Phosphothreonine mark. His94 lines the heme b pocket.

In terms of assembly, monomer.

Its subcellular location is the cytoplasm. The protein resides in the sarcoplasm. It catalyses the reaction Fe(III)-heme b-[protein] + nitric oxide + H2O = Fe(II)-heme b-[protein] + nitrite + 2 H(+). It carries out the reaction H2O2 + AH2 = A + 2 H2O. Functionally, monomeric heme protein which primary function is to store oxygen and facilitate its diffusion within muscle tissues. Reversibly binds oxygen through a pentacoordinated heme iron and enables its timely and efficient release as needed during periods of heightened demand. Depending on the oxidative conditions of tissues and cells, and in addition to its ability to bind oxygen, it also has a nitrite reductase activity whereby it regulates the production of bioactive nitric oxide. Under stress conditions, like hypoxia and anoxia, it also protects cells against reactive oxygen species thanks to its pseudoperoxidase activity. In Delphinapterus leucas (Beluga whale), this protein is Myoglobin (MB).